A 448-amino-acid polypeptide reads, in one-letter code: MEVKYVTVGALTKYIKRKFDVDPHLRDLWVKGEISNFKQHSRGHMYFTLKDSQGRIAAVMFAGYNQHLPFRPEDGMNVLARGEISVYEPNGNYQLYVKEMQPEGVGSLYLAYEQLKQRLEAEGLFSPVHKKPLPAFPRCIGVVTSPTGAAVRDIMTTIRRRYPLAKVILFPALVQGDGAAPSIVRAIERANSFGGVDVLIVGRGGGSIEELWAFNEEIVARAIFASKIPIISAVGHETDFTIADFVADLRAPTPTAAAEMAAPHVGELAERLAERKWRLIRAMKEQLAADKEQLRRLQGSYAFRYPKRLYEQKEQQLDALLERLSRQRERLVDKHRQRLHELDMRLWRHHPAAELERMKERQKAAANALEKAMRTAVERHRFRFRSNLARLEALSPLRIMERGYSLVYNEQGELVKRTNQLRIGEHLSIQVQDGRVDCQVTGVEEKHV.

The protein belongs to the XseA family. In terms of assembly, heterooligomer composed of large and small subunits.

It localises to the cytoplasm. The enzyme catalyses Exonucleolytic cleavage in either 5'- to 3'- or 3'- to 5'-direction to yield nucleoside 5'-phosphates.. Functionally, bidirectionally degrades single-stranded DNA into large acid-insoluble oligonucleotides, which are then degraded further into small acid-soluble oligonucleotides. This Geobacillus kaustophilus (strain HTA426) protein is Exodeoxyribonuclease 7 large subunit.